The following is a 466-amino-acid chain: Phosphomethylpyrimidine synthase (466 aa).

Substrate is bound by residues Asn80, Met109, Tyr139, His175, 195-197 (SRG), 236-239 (DSLR), and Glu275. His279 provides a ligand contact to Zn(2+). Tyr302 provides a ligand contact to substrate. His343 is a binding site for Zn(2+). Residues Cys423, Cys426, and Cys431 each coordinate [4Fe-4S] cluster.

It belongs to the ThiC family. [4Fe-4S] cluster is required as a cofactor.

The enzyme catalyses 5-amino-1-(5-phospho-beta-D-ribosyl)imidazole + S-adenosyl-L-methionine = 4-amino-2-methyl-5-(phosphooxymethyl)pyrimidine + CO + 5'-deoxyadenosine + formate + L-methionine + 3 H(+). Its pathway is cofactor biosynthesis; thiamine diphosphate biosynthesis. Functionally, catalyzes the synthesis of the hydroxymethylpyrimidine phosphate (HMP-P) moiety of thiamine from aminoimidazole ribotide (AIR) in a radical S-adenosyl-L-methionine (SAM)-dependent reaction. The sequence is that of Phosphomethylpyrimidine synthase from Synechococcus sp. (strain CC9902).